The following is a 273-amino-acid chain: Ribosomal RNA small subunit methyltransferase A (273 aa).

6 residues coordinate S-adenosyl-L-methionine: Asn18, Leu20, Gly45, Glu66, Asp91, and Asn113.

The protein belongs to the class I-like SAM-binding methyltransferase superfamily. rRNA adenine N(6)-methyltransferase family. RsmA subfamily.

Its subcellular location is the cytoplasm. It catalyses the reaction adenosine(1518)/adenosine(1519) in 16S rRNA + 4 S-adenosyl-L-methionine = N(6)-dimethyladenosine(1518)/N(6)-dimethyladenosine(1519) in 16S rRNA + 4 S-adenosyl-L-homocysteine + 4 H(+). Specifically dimethylates two adjacent adenosines (A1518 and A1519) in the loop of a conserved hairpin near the 3'-end of 16S rRNA in the 30S particle. May play a critical role in biogenesis of 30S subunits. The polypeptide is Ribosomal RNA small subunit methyltransferase A (Escherichia coli O81 (strain ED1a)).